The chain runs to 271 residues: Eukaryotic translation initiation factor 2 subunit beta (271 aa).

A C4-type zinc finger spans residues 223-247 (CLGCQSPDTILSKENRLFFLRCEKC).

It belongs to the eIF-2-beta/eIF-5 family. As to quaternary structure, eukaryotic translation initiation factor 2 eIF2 is a heterotrimeric complex composed of an alpha, a beta and a gamma subunit.

It is found in the cytoplasm. The protein resides in the cytosol. Functionally, component of the eIF2 complex that functions in the early steps of protein synthesis by forming a ternary complex with GTP and initiator tRNA. This complex binds to a 40S ribosomal subunit, followed by mRNA binding to form a 43S pre-initiation complex (43S PIC). Junction of the 60S ribosomal subunit to form the 80S initiation complex is preceded by hydrolysis of the GTP bound to eIF2 and release of an eIF2-GDP binary complex. In order for eIF2 to recycle and catalyze another round of initiation, the GDP bound to eIF2 must exchange with GTP by way of a reaction catalyzed by eIF2B. This is Eukaryotic translation initiation factor 2 subunit beta from Malus domestica (Apple).